Reading from the N-terminus, the 934-residue chain is MTRHLTLCFILLVMLIDKSEACFCDHYPWTHWSSCSKSCNSGTQSRQRQVVVNDYYWKNLCDKLCIKQETRECNLQTCPINCVLGDYGTWSDCDPCTEKQVKVKSVLRPSQFGGQPCTEPLVTFQPCVPSKLCKIEETNCKNKFLCDSGRCIPSKLECNGENDCGDNSDERNCGRTKPVCTRIYTPIPSVQLMGTGFHFLAGEPRGEVLDNSFTGGICKLVKTSRASNPYRVSANLENVNFEVQTIEDDLKTEFYKNLISFEKNKNEDSLSVDERTKFFPIPIFHFSEKNEHSHYSSAFNKVIKASHKKDSSFIRIHKLIKVLNFTMKATDLQLSDVFLKALVHLPLEYNSAVYSRIFDDFGTHYFTSGSLGGKYDLIYQFSRQELQNSGLTEEEAQNCVQYETKKLKFLYMEIHKEDTCTKNKLSEKYGGSFLQGSEKSISLVQGGRSQQAAALAWEKGTSGPEENVYSEWLESVKENPAVVDYKLAPITDLVRNIPCAVTKRNNLRRALQEYAAKFDPCQCAPCPNNGRPRLSGTECLCVCQSGTYGENCERRSPGYKSDAVDGNWGCWSSWSACNAAYRRSRTRECNNPAPQRGGQSCGGKDQQEEDCTVSIMENVGQPCINDDEEMKEVDLAEPEAESGCSQPPLPENAFTWNEKKLYSVGEEVEISCLTGFTAVGFQYLRCLPDRTWSQGDVECQRTSCLKPVVQDVLTISPFQRVYQIGESIELTCPRGFVVAGPSRYTCKEDSWTPPISNSLTCEQAILTKSKDLCPPGQKQSGSKCICMSPEEDCSAYSEDLCIFDGGSSQYFTSSACKFLAGKCLNNTQSHFVHSGSCQEGLQLEWGLERLKLAVNSTKRVSCGYNTCYDWENCSAHTSNCVCLLPPQCSKDENQLYCVKIGSSMREKTVNICTLGAVRCANIKVEILNPGRCPD.

Residues 1 to 21 (MTRHLTLCFILLVMLIDKSEA) form the signal peptide. Intrachain disulfides connect C22–C61, C24–C65, C35–C73, C39–C78, C82–C117, C93–C127, C96–C133, C140–C151, C146–C164, C158–C173, and C180–C218. TSP type-1 domains follow at residues 22–79 (CFCD…QTCP) and 81–134 (NCVL…KLCK). The 38-residue stretch at 138–175 (TNCKNKFLCDSGRCIPSKLECNGENDCGDNSDERNCGR) folds into the LDL-receptor class A domain. Positions 156, 159, 161, 163, 169, and 170 each coordinate Ca(2+). One can recognise an MACPF domain in the interval 176 to 522 (TKPVCTRIYT…EYAAKFDPCQ (347 aa)). Residues 278–290 (FFPIPIFHFSEKN) traverse the membrane as a beta stranded segment. N324 carries N-linked (GlcNAc...) asparagine glycosylation. Disulfide bonds link C399/C420, C499/C623, C521/C570, C523/C539, C526/C541, C543/C552, C577/C611, C589/C601, C644/C686, C672/C699, C704/C746, C732/C761, C773/C823, C784/C801, C786/C837, and C793/C816. Residues 402 to 415 (YETKKLKFLYMEIH) traverse the membrane as a beta stranded segment. In terms of domain architecture, EGF-like spans 523-553 (CAPCPNNGRPRLSGTECLCVCQSGTYGENCE). A TSP type-1 3 domain is found at 565–612 (DGNWGCWSSWSACNAAYRRSRTRECNNPAPQRGGQSCGGKDQQEEDCT). 2 CCP regions span residues 611–688 (CTVS…RCLP) and 689–765 (DRTW…EQAI). 2 consecutive Sushi domains span residues 642-701 (SGCS…ECQR) and 702-763 (TSCL…TCEQ). The segment at 642–934 (SGCSQPPLPE…EILNPGRCPD (293 aa)) is C5b-binding domain. The interval 766 to 840 (LTKSKDLCPP…FVHSGSCQEG (75 aa)) is factor I module (FIM) 1. Residues 785-839 (ICMSPEEDCSAYSEDLCIFDGGSSQYFTSSACKFLAGKCLNNTQSHFVHSGSCQE) enclose the Kazal-like 1 domain. Residues N825, N855, and N872 are each glycosylated (N-linked (GlcNAc...) asparagine). Positions 858–934 (KRVSCGYNTC…EILNPGRCPD (77 aa)) are factor I module (FIM) 2. 5 cysteine pairs are disulfide-bonded: C862-C873, C867-C919, C880-C897, C882-C932, and C888-C912. A Kazal-like 2 domain is found at 876–934 (HTSNCVCLLPPQCSKDENQLYCVKIGSSMREKTVNICTLGAVRCANIKVEILNPGRCPD).

Belongs to the complement C6/C7/C8/C9 family. As to quaternary structure, component of the membrane attack complex (MAC), composed of complement C5b, C6, C7, C8A, C8B, C8G and multiple copies of the pore-forming subunit C9. All cysteine residues are assumed to be cross-linked to one another. Individual modules containing an even number of conserved cysteine residues are supposed to have disulfide linkages only within the same module.

It localises to the secreted. The protein resides in the target cell membrane. Its activity is regulated as follows. Membrane attack complex (MAC) assembly is inhibited by CD59, thereby protecting self-cells from damage during complement activation. MAC assembly is also inhibited by clusterin (CLU) chaperones that inhibit polymerization of C9. Its function is as follows. Component of the membrane attack complex (MAC), a multiprotein complex activated by the complement cascade, which inserts into a target cell membrane and forms a pore, leading to target cell membrane rupture and cell lysis. The MAC is initiated by proteolytic cleavage of C5 into complement C5b in response to the classical, alternative, lectin and GZMK complement pathways. The complement pathways consist in a cascade of proteins that leads to phagocytosis and breakdown of pathogens and signaling that strengthens the adaptive immune system. Together with component C5b, involved in MAC complex assembly: complement C5b and C6 associate with the outer leaflet of target cell membrane, reducing the energy for membrane bending. The chain is Complement component C6 from Mus musculus (Mouse).